Reading from the N-terminus, the 213-residue chain is Glycerol-3-phosphate acyltransferase (213 aa).

The next 6 membrane-spanning stretches (helical) occupy residues 3–23 (IIILLLIASYLLGAIPFGLWI), 48–68 (ILGVKAGIAVFIFDLLKGTLA), 71–91 (LPLIFHINGVSPLIFGLLAVI), 119–139 (PFFLLYLLVIFILVLWLFSMI), 144–164 (VVAAIFALLGILIFPSFGFIL), and 165–185 (TSYDLLFSIIIFALAIIIIFR).

This sequence belongs to the PlsY family. As to quaternary structure, probably interacts with PlsX.

The protein localises to the cell membrane. The catalysed reaction is an acyl phosphate + sn-glycerol 3-phosphate = a 1-acyl-sn-glycero-3-phosphate + phosphate. It participates in lipid metabolism; phospholipid metabolism. Functionally, catalyzes the transfer of an acyl group from acyl-phosphate (acyl-PO(4)) to glycerol-3-phosphate (G3P) to form lysophosphatidic acid (LPA). This enzyme utilizes acyl-phosphate as fatty acyl donor, but not acyl-CoA or acyl-ACP. This Lactococcus lactis subsp. cremoris (strain MG1363) protein is Glycerol-3-phosphate acyltransferase.